A 521-amino-acid chain; its full sequence is Protein NRT1/ PTR FAMILY 5.5 (521 aa).

12 consecutive transmembrane segments (helical) span residues V3–T23, A35–V55, F62–S82, F96–V116, L134–A154, F165–S185, V279–F299, F310–A327, P356–V376, V394–I414, V440–V460, and Y478–Y498.

The protein belongs to the major facilitator superfamily. Proton-dependent oligopeptide transporter (POT/PTR) (TC 2.A.17) family. Expressed in roots.

It is found in the membrane. This is Protein NRT1/ PTR FAMILY 5.5 (NPF5.5) from Arabidopsis thaliana (Mouse-ear cress).